The following is a 407-amino-acid chain: Multidrug resistance protein MdtH (407 aa).

The next 10 membrane-spanning stretches (helical) occupy residues 13–33 (CFLI…FPLI), 88–108 (LGFI…SCML), 139–159 (VLML…TWLL), 163–183 (FKLV…FNAW), 210–230 (FVIY…VMLM), 247–267 (WMYI…TWWS), 277–297 (LMVG…VKNL), 298–318 (HTLL…EPAR), 340–360 (LSLA…YDIG), and 368–388 (LPWI…YCQF).

Belongs to the major facilitator superfamily. DHA1 family. MdtH (TC 2.A.1.2.21) subfamily.

The protein localises to the cell inner membrane. The polypeptide is Multidrug resistance protein MdtH (Blochmanniella pennsylvanica (strain BPEN)).